The chain runs to 641 residues: Threonine--tRNA ligase (641 aa).

The 61-residue stretch at methionine 1–threonine 61 folds into the TGS domain. Residues aspartate 240 to proline 538 form a catalytic region. Zn(2+) is bound by residues cysteine 334, histidine 385, and histidine 515.

The protein belongs to the class-II aminoacyl-tRNA synthetase family. In terms of assembly, homodimer. Zn(2+) is required as a cofactor.

The protein resides in the cytoplasm. It catalyses the reaction tRNA(Thr) + L-threonine + ATP = L-threonyl-tRNA(Thr) + AMP + diphosphate + H(+). Catalyzes the attachment of threonine to tRNA(Thr) in a two-step reaction: L-threonine is first activated by ATP to form Thr-AMP and then transferred to the acceptor end of tRNA(Thr). Also edits incorrectly charged L-seryl-tRNA(Thr). The polypeptide is Threonine--tRNA ligase (Aster yellows witches'-broom phytoplasma (strain AYWB)).